The sequence spans 197 residues: MSARAPKELRLALPPCLLNRTFASPNASGSGNTGARGPGAGGSGTCITQVGQQLFQSFSSTLVLIVLVTLIFCLIVLSLSTFHIHKRRMKKRKMQRAQEEYERDHCSGSRGGGGLPRPGRQAPTHAKETRLERQPRDSPICAPSNASSSSSSSPGLPCQGPCAPPPPPPASSPQGAHAVSSCLDTAGEGLLQTVVLS.

Residues Met1 to Ala23 form the signal peptide. N-linked (GlcNAc...) asparagine glycosylation is found at Asn19 and Asn26. The Extracellular portion of the chain corresponds to Ser24–Thr61. A helical membrane pass occupies residues Leu62–Phe82. Topologically, residues His83–Ser197 are cytoplasmic. Positions Met94 to Val179 are disordered. Composition is skewed to basic and acidic residues over residues Arg96–Ser107 and His125–Arg136. Positions Ser147–Pro161 are enriched in low complexity. Pro residues predominate over residues Cys162–Ser171.

Its subcellular location is the membrane. This is an uncharacterized protein from Pongo abelii (Sumatran orangutan).